A 374-amino-acid chain; its full sequence is MNPATTEFVRQRFAEYYRKAMLVSPSSLAQREWGFVLFNPGAAELRMRRHIAFPERTELFDYIRNLVPSHVYYSSAYYEKPDAPTMAEKGWCGADLIFDLDADHIVKGPYDQMLSRVKTETEKLLAMLTEELGIDSKQIELVFSGGRGYHVHVRDLAFRGWGSAERRELVDYICGIGIDPAVLLNGGLVPGWPARFRSALAEYIGWLGTLSEDGAMAHLTSLEGVGKESAAGFLKKRAEILAGLSGEIDPTLLKDRVIKAVVHETEGEFRKRLNEKAALADEPVTTDIKRLIRMPTSIHGGSGMRVQPLELRDLPDFDPLVDAVVFSAREVRVDARFPLAMPMLGSTYQIQKGISTVPEAVGVFLCCRGIAEIA.

Catalysis depends on residues Asp99, Asp101, and Asp281.

Belongs to the eukaryotic-type primase small subunit family. Heterodimer of a small subunit (PriS) and a large subunit (PriL). Mg(2+) is required as a cofactor. Mn(2+) serves as cofactor.

In terms of biological role, catalytic subunit of DNA primase, an RNA polymerase that catalyzes the synthesis of short RNA molecules used as primers for DNA polymerase during DNA replication. The small subunit contains the primase catalytic core and has DNA synthesis activity on its own. Binding to the large subunit stabilizes and modulates the activity, increasing the rate of DNA synthesis while decreasing the length of the DNA fragments, and conferring RNA synthesis capability. The DNA polymerase activity may enable DNA primase to also catalyze primer extension after primer synthesis. May also play a role in DNA repair. This chain is DNA primase small subunit PriS, found in Methanoregula boonei (strain DSM 21154 / JCM 14090 / 6A8).